Consider the following 290-residue polypeptide: 2-dehydro-3-deoxyphosphooctonate aldolase 1 (290 aa).

N-acetylalanine is present on Ala2.

It belongs to the KdsA family. As to expression, expressed in shoots.

It localises to the cytoplasm. The catalysed reaction is D-arabinose 5-phosphate + phosphoenolpyruvate + H2O = 3-deoxy-alpha-D-manno-2-octulosonate-8-phosphate + phosphate. Its function is as follows. Catalyzes the stereospecific condensation of D-arabinose 5-phosphate and phosphoenolpyruvate to form 3-deoxy-D-manno-octulosonate 8-phosphate (KDO-8-phosphate) and inorganic phosphate. Involved in the biosynthesis of 3-deoxy-D-manno-octulosonate (KDO) which is an indispensable component of rhamnogalacturonan II (RG-II), a structurally complex pectic polysaccharide of the primary cell wall. RG-II is essential for the cell wall integrity of rapidly growing tissues and pollen tube growth and elongation. This chain is 2-dehydro-3-deoxyphosphooctonate aldolase 1 (KDSA1), found in Arabidopsis thaliana (Mouse-ear cress).